The sequence spans 192 residues: Fe/S biogenesis protein NfuA (192 aa).

[4Fe-4S] cluster is bound by residues Cys149 and Cys152.

This sequence belongs to the NfuA family. As to quaternary structure, homodimer. [4Fe-4S] cluster serves as cofactor.

Its function is as follows. Involved in iron-sulfur cluster biogenesis. Binds a 4Fe-4S cluster, can transfer this cluster to apoproteins, and thereby intervenes in the maturation of Fe/S proteins. Could also act as a scaffold/chaperone for damaged Fe/S proteins. In Shewanella sediminis (strain HAW-EB3), this protein is Fe/S biogenesis protein NfuA.